Reading from the N-terminus, the 248-residue chain is uncharacterized protein (248 aa).

This sequence belongs to the glycosyltransferase 2 family.

This is an uncharacterized protein from Acanthamoeba polyphaga (Amoeba).